The chain runs to 233 residues: Adenosine 5'-phosphosulfate reductase (233 aa).

[4Fe-4S] cluster is bound by residues Cys120, Cys121, Cys203, and Cys206. Cys229 (nucleophile; cysteine thiosulfonate intermediate) is an active-site residue.

This sequence belongs to the PAPS reductase family. CysH subfamily. Requires [4Fe-4S] cluster as cofactor.

Its subcellular location is the cytoplasm. The enzyme catalyses [thioredoxin]-disulfide + sulfite + AMP + 2 H(+) = adenosine 5'-phosphosulfate + [thioredoxin]-dithiol. It participates in sulfur metabolism; hydrogen sulfide biosynthesis; sulfite from sulfate. Catalyzes the formation of sulfite from adenosine 5'-phosphosulfate (APS) using thioredoxin as an electron donor. In Lysinibacillus sphaericus (strain C3-41), this protein is Adenosine 5'-phosphosulfate reductase.